Reading from the N-terminus, the 152-residue chain is TRAPP-associated protein TCA17 (152 aa).

This sequence belongs to the TRAPP small subunits family. Sedlin subfamily. In terms of assembly, interacts with the TRAPP II complex; TRAPP II subunits TRS33 and TRS65 are required for this interaction.

It is found in the golgi apparatus. Its subcellular location is the trans-Golgi network. In terms of biological role, required, together with the TRAPP II subunit TRS33, for TRAPP II complex assembly or stability, and for proper Golgi localization of TRAPP and the Rab GTPase YPT31. The chain is TRAPP-associated protein TCA17 (TCA17) from Saccharomyces cerevisiae (strain ATCC 204508 / S288c) (Baker's yeast).